The chain runs to 383 residues: Cyclin-D4-2 (383 aa).

The span at 51–62 (AAGGGGGSGGGG) shows a compositional bias: gly residues. Disordered stretches follow at residues 51–70 (AAGGGGGSGGGGVEEEEDMF), 313–335 (QPKPASTRRGSASASSSSVPESP), and 354–383 (ATIASHGGGRRKSCFDSSPVTSKKRRKLSR). The span at 323-335 (SASASSSSVPESP) shows a compositional bias: low complexity.

This sequence belongs to the cyclin family. Cyclin D subfamily.

The sequence is that of Cyclin-D4-2 (CYCD4-2) from Oryza sativa subsp. japonica (Rice).